Here is a 294-residue protein sequence, read N- to C-terminus: NAD kinase (294 aa).

The active-site Proton acceptor is aspartate 72. NAD(+) contacts are provided by residues 72-73 (DG), 146-147 (ND), arginine 157, arginine 174, aspartate 176, 187-192 (TAYSLS), and glutamine 247.

Belongs to the NAD kinase family. A divalent metal cation is required as a cofactor.

It localises to the cytoplasm. The enzyme catalyses NAD(+) + ATP = ADP + NADP(+) + H(+). Involved in the regulation of the intracellular balance of NAD and NADP, and is a key enzyme in the biosynthesis of NADP. Catalyzes specifically the phosphorylation on 2'-hydroxyl of the adenosine moiety of NAD to yield NADP. The sequence is that of NAD kinase from Marinobacter nauticus (strain ATCC 700491 / DSM 11845 / VT8) (Marinobacter aquaeolei).